The following is a 298-amino-acid chain: Ethanolamine ammonia-lyase small subunit (298 aa).

Residues 15–43 (ASMGQDVPQPVAPSTQEGAKPQRAAPTAT) form a disordered region. Adenosylcob(III)alamin contacts are provided by valine 210, glutamate 231, and cysteine 261.

The protein belongs to the EutC family. As to quaternary structure, the basic unit is a heterodimer which dimerizes to form tetramers. The heterotetramers trimerize; 6 large subunits form a core ring with 6 small subunits projecting outwards. Requires adenosylcob(III)alamin as cofactor.

The protein localises to the bacterial microcompartment. It catalyses the reaction ethanolamine = acetaldehyde + NH4(+). It functions in the pathway amine and polyamine degradation; ethanolamine degradation. Functionally, catalyzes the deamination of various vicinal amino-alcohols to oxo compounds. Allows this organism to utilize ethanolamine as the sole source of nitrogen and carbon in the presence of external vitamin B12. The sequence is that of Ethanolamine ammonia-lyase small subunit from Salmonella arizonae (strain ATCC BAA-731 / CDC346-86 / RSK2980).